The following is a 541-amino-acid chain: Glucose-6-phosphate isomerase (541 aa).

The Proton donor role is filled by Glu-346. Residues His-377 and Lys-506 contribute to the active site.

This sequence belongs to the GPI family.

The protein localises to the cytoplasm. It catalyses the reaction alpha-D-glucose 6-phosphate = beta-D-fructose 6-phosphate. Its pathway is carbohydrate biosynthesis; gluconeogenesis. It functions in the pathway carbohydrate degradation; glycolysis; D-glyceraldehyde 3-phosphate and glycerone phosphate from D-glucose: step 2/4. Functionally, catalyzes the reversible isomerization of glucose-6-phosphate to fructose-6-phosphate. The chain is Glucose-6-phosphate isomerase from Rhizobium etli (strain CIAT 652).